A 527-amino-acid chain; its full sequence is Acid-sensing ion channel 1 (527 aa).

Residues 1–49 (MMDLKVDEEEVDSGQPVSIQAFASSSTLHGISHIFSYERLSLKRVVWAL) lie on the Cytoplasmic side of the membrane. The chain crosses the membrane as a helical span at residues 50 to 71 (CFMGSLALLALVCTNRIQYYFL). The Extracellular segment spans residues 72–424 (YPHVTKLDEV…NYETIEQKKA (353 aa)). Cystine bridges form between cysteine 94-cysteine 195, cysteine 173-cysteine 180, cysteine 291-cysteine 366, cysteine 309-cysteine 362, cysteine 313-cysteine 360, cysteine 322-cysteine 344, and cysteine 324-cysteine 336. N-linked (GlcNAc...) asparagine glycosylation is found at asparagine 367 and asparagine 394. Residues 425 to 454 (YEVAGLLGDIGGQMGLFIGASILTVLELFD) form a discontinuously helical membrane-spanning segment. The GAS motif; ion selectivity filter signature appears at 443–445 (GAS). Residues 455–527 (YAYEVIKHRL…ARGTFEDFTC (73 aa)) lie on the Cytoplasmic side of the membrane.

It belongs to the amiloride-sensitive sodium channel (TC 1.A.6) family. ASIC1 subfamily. As to quaternary structure, homotrimer. Heterotrimer; with other ASIC proteins producing channel with different properties.

The protein resides in the cell membrane. Its subcellular location is the postsynaptic cell membrane. It localises to the cell projection. It is found in the dendrite. The catalysed reaction is Na(+)(in) = Na(+)(out). It catalyses the reaction Li(+)(in) = Li(+)(out). It carries out the reaction K(+)(in) = K(+)(out). The enzyme catalyses Ca(2+)(in) = Ca(2+)(out). Its activity is regulated as follows. Inhibited by the diuretic drug amiloride. Inhibited by Cs(1+) ions. Inhibited by the spider venom psalmotoxin-1; this locks the channel into its desensitized conformation. Channel activity is increased by the heterodimeric snake venom neurotoxin composed of MitTx-alpha and MitTx-beta; this slows channel closure and increases the magnitude of the steady-state current that is triggered by low pH. Functionally, forms voltage-independent, pH-gated trimeric sodium channels that act as postsynaptic excitatory receptors in the nervous system, playing a crucial role in regulating synaptic plasticity, learning, and memory. Upon extracellular pH drop this channel elicits transient, fast activating, and completely desensitizing inward currents. Displays high selectivity for sodium ions but can also permit the permeation of other cations. Regulates more or less directly intracellular calcium concentration and CaMKII phosphorylation, and thereby the density of dendritic spines. Modulates neuronal activity in the circuits underlying innate fear. This chain is Acid-sensing ion channel 1, found in Gallus gallus (Chicken).